The following is a 72-amino-acid chain: Translation initiation factor IF-1 (72 aa).

The S1-like domain occupies 1–72; the sequence is MTKEENIEMQ…SKGRIIFRSR (72 aa).

It belongs to the IF-1 family. In terms of assembly, component of the 30S ribosomal translation pre-initiation complex which assembles on the 30S ribosome in the order IF-2 and IF-3, IF-1 and N-formylmethionyl-tRNA(fMet); mRNA recruitment can occur at any time during PIC assembly.

It is found in the cytoplasm. One of the essential components for the initiation of protein synthesis. Stabilizes the binding of IF-2 and IF-3 on the 30S subunit to which N-formylmethionyl-tRNA(fMet) subsequently binds. Helps modulate mRNA selection, yielding the 30S pre-initiation complex (PIC). Upon addition of the 50S ribosomal subunit IF-1, IF-2 and IF-3 are released leaving the mature 70S translation initiation complex. The protein is Translation initiation factor IF-1 of Wigglesworthia glossinidia brevipalpis.